The following is an 86-amino-acid chain: Antimicrobial peptide 2 (86 aa).

An N-terminal signal peptide occupies residues 1–25 (MVNMKCVALIVIVMMAFMMVDPSMG). Intrachain disulfides connect Cys29–Cys40, Cys34–Cys46, and Cys39–Cys53. In terms of domain architecture, Chitin-binding type-1 spans 29–53 (CVRGRCPSGMCCSQFGYCGKGPKYC). Positions 56–86 (ASTTVDHQADVAATKTAKNPTDAKLAGAGSP) are cleaved as a propeptide — removed in mature form.

In terms of assembly, homodimer.

Chitin-binding protein with a defensive function against numerous chitin containing fungal pathogens. It is also a potent inhibitor of Gram-positive bacteria. The protein is Antimicrobial peptide 2 of Amaranthus caudatus (Love-lies-bleeding).